The sequence spans 303 residues: Bifunctional protein FolD (303 aa).

NADP(+) contacts are provided by residues 175–177 (GVS) and Ile-243.

Belongs to the tetrahydrofolate dehydrogenase/cyclohydrolase family. Homodimer.

It catalyses the reaction (6R)-5,10-methylene-5,6,7,8-tetrahydrofolate + NADP(+) = (6R)-5,10-methenyltetrahydrofolate + NADPH. It carries out the reaction (6R)-5,10-methenyltetrahydrofolate + H2O = (6R)-10-formyltetrahydrofolate + H(+). The protein operates within one-carbon metabolism; tetrahydrofolate interconversion. Functionally, catalyzes the oxidation of 5,10-methylenetetrahydrofolate to 5,10-methenyltetrahydrofolate and then the hydrolysis of 5,10-methenyltetrahydrofolate to 10-formyltetrahydrofolate. The protein is Bifunctional protein FolD of Xanthomonas axonopodis pv. citri (strain 306).